The following is a 381-amino-acid chain: Opsin-1 (381 aa).

At 1-53 the chain is on the extracellular side; that stretch reads MASASLISEPSFSAYWGGSGGFANQTVVDKVPPEMLYLVDPHWYQFPPMNPLW. N24 carries N-linked (GlcNAc...) asparagine glycosylation. Residues 54–78 form a helical membrane-spanning segment; it reads HGLLGFVIGVLGVISVIGNGMVIYI. Over 79–90 the chain is Cytoplasmic; it reads FSTTKSLRTPSN. A helical membrane pass occupies residues 91–115; the sequence is LLVVNLAFSDFLMMFTMSAPMGINC. Residues 116 to 130 lie on the Extracellular side of the membrane; sequence YYETWVLGPFMCELY. C127 and C204 are disulfide-bonded. Residues 131 to 150 form a helical membrane-spanning segment; it reads ALFGSLFGCGSIWTMTMIAL. The Cytoplasmic segment spans residues 151-169; that stretch reads DRYNVIVKGLSAKPMTNKT. Residues 170 to 193 traverse the membrane as a helical segment; it reads AMLRILFIWAFSVAWTIMPLFGWN. Topologically, residues 194-217 are extracellular; that stretch reads RYVPEGNMTACGTDYLTKDWVSRS. Residue N200 is glycosylated (N-linked (GlcNAc...) asparagine). The chain crosses the membrane as a helical span at residues 218 to 245; sequence YILVYSFFVYLLPLGTIIYSYFFILQAV. Residues 246-280 lie on the Cytoplasmic side of the membrane; that stretch reads SAHEKQMREQRKKMNVASLRSAEASQTSAECKLAK. A helical membrane pass occupies residues 281–304; the sequence is VALMTISLWFFGWTPYLIINFTGI. Topologically, residues 305-311 are extracellular; that stretch reads FETMKIS. The chain crosses the membrane as a helical span at residues 312-336; it reads PLLTIWGSLFAKANAVFNPIVYGIS. N6-(retinylidene)lysine is present on K323. The Cytoplasmic segment spans residues 337–381; sequence HPKYRAALEKKFPSLACASSSDDNTSVASGATTVSDEKSEKSASA. Positions 354 to 370 are enriched in polar residues; it reads ASSSDDNTSVASGATTV. The disordered stretch occupies residues 354–381; that stretch reads ASSSDDNTSVASGATTVSDEKSEKSASA. The span at 371–381 shows a compositional bias: basic and acidic residues; sequence SDEKSEKSASA.

Belongs to the G-protein coupled receptor 1 family. Opsin subfamily. Phosphorylated on some or all of the serine and threonine residues present in the C-terminal region.

The protein resides in the cell projection. Its subcellular location is the rhabdomere membrane. Functionally, visual pigments are the light-absorbing molecules that mediate vision. They consist of an apoprotein, opsin, covalently linked to cis-retinal. This chain is Opsin-1 (Lo1), found in Schistocerca gregaria (Desert locust).